Consider the following 373-residue polypeptide: MTEVLWPAVPNGTDAAFLAGPGSSWGNSTVASTAAVSSSFKCALTKTGFQFYYLPAVYILVFIIGFLGNSVAIWMFVFHMKPWSGISVYMFNLALADFLYVLTLPALIFYYFNKTDWIFGDAMCKLQRFIFHVNLYGSILFLTCISAHRYSGVVYPLKSLGRLKKKNAICISVLVWLIVVVAISPILFYSGTGVRKNKTITCYDTTSDEYLRSYFIYSMCTTVAMFCVPLVLILGCYGLIVRALIYKDLDNSPLRRKSIYLVIIVLTVFAVSYIPFHVMKTMNLRARLDFQTPAMCAFNDRVYATYQVTRGLASLNSCVDPILYFLAGDTFRRRLSRATRKASRRSEANLQSKSEDMTLNILPEFKQNGDTSL.

The Extracellular portion of the chain corresponds to 1 to 51 (MTEVLWPAVPNGTDAAFLAGPGSSWGNSTVASTAAVSSSFKCALTKTGFQF). Asparagine 11 and asparagine 27 each carry an N-linked (GlcNAc...) asparagine glycan. 2 disulfides stabilise this stretch: cysteine 42-cysteine 296 and cysteine 124-cysteine 202. Lysine 46 contributes to the ADP binding site. The chain crosses the membrane as a helical span at residues 52–74 (YYLPAVYILVFIIGFLGNSVAIW). The Cytoplasmic segment spans residues 75 to 87 (MFVFHMKPWSGIS). Residues 88–109 (VYMFNLALADFLYVLTLPALIF) traverse the membrane as a helical segment. Over 110–125 (YYFNKTDWIFGDAMCK) the chain is Extracellular. Residue asparagine 113 is glycosylated (N-linked (GlcNAc...) asparagine). Residues 126 to 147 (LQRFIFHVNLYGSILFLTCISA) form a helical membrane-spanning segment. Topologically, residues 148 to 166 (HRYSGVVYPLKSLGRLKKK) are cytoplasmic. A helical membrane pass occupies residues 167–188 (NAICISVLVWLIVVVAISPILF). The Extracellular segment spans residues 189 to 214 (YSGTGVRKNKTITCYDTTSDEYLRSY). N-linked (GlcNAc...) asparagine glycosylation is present at asparagine 197. 203–205 (YDT) is an ADP binding site. The helical transmembrane segment at 215–237 (FIYSMCTTVAMFCVPLVLILGCY) threads the bilayer. Residues 238–260 (GLIVRALIYKDLDNSPLRRKSIY) lie on the Cytoplasmic side of the membrane. Residues 261–284 (LVIIVLTVFAVSYIPFHVMKTMNL) traverse the membrane as a helical segment. ADP contacts are provided by residues 283-287 (NLRAR), 303-306 (YATY), and arginine 310. Residues 285–303 (RARLDFQTPAMCAFNDRVY) are Extracellular-facing. The helical transmembrane segment at 304-325 (ATYQVTRGLASLNSCVDPILYF) threads the bilayer. Residues 326–373 (LAGDTFRRRLSRATRKASRRSEANLQSKSEDMTLNILPEFKQNGDTSL) lie on the Cytoplasmic side of the membrane.

The protein belongs to the G-protein coupled receptor 1 family.

The protein resides in the cell membrane. ATP functions as antagonist and inhibits ADP-induced mobilization of Ca(2+). The P2Y1 receptor-specific antagonists A3P5PS, A3P5P and A2P5P inhibit downstream signaling mediated by mobilization of Ca(2+) from intracellular stores, and platelet shape changes in response to extracellular ADP. In terms of biological role, receptor for extracellular adenine nucleotides such as ADP. In platelets, binding to ADP leads to mobilization of intracellular calcium ions via activation of phospholipase C, a change in platelet shape, and ultimately platelet aggregation. The chain is P2Y purinoceptor 1 (P2RY1) from Homo sapiens (Human).